We begin with the raw amino-acid sequence, 459 residues long: Glycerol-3-phosphate acyltransferase, chloroplastic (459 aa).

The transit peptide at 1–90 (MTLTFSSSAA…FNEAAGETPS (90 aa)) directs the protein to the chloroplast. An HXXXXD motif motif is present at residues 229 to 234 (HQSEAD).

The protein belongs to the GPAT/DAPAT family.

It is found in the plastid. It localises to the chloroplast stroma. It carries out the reaction sn-glycerol 3-phosphate + an acyl-CoA = a 1-acyl-sn-glycero-3-phosphate + CoA. Its pathway is phospholipid metabolism; CDP-diacylglycerol biosynthesis; CDP-diacylglycerol from sn-glycerol 3-phosphate: step 1/3. Its function is as follows. Esterifies acyl-group from acyl-ACP to the sn-1 position of glycerol-3-phosphate. The enzyme from chilling-resistant plants discriminates against non-fluid palmitic acid and selects oleic acid whereas the enzyme from sensitive plants accepts both fatty acids. This is an oleate-selective acyltransferase. The sequence is that of Glycerol-3-phosphate acyltransferase, chloroplastic (ATS1) from Arabidopsis thaliana (Mouse-ear cress).